Reading from the N-terminus, the 97-residue chain is Meromycolate extension acyl carrier protein (97 aa).

The region spanning 3–81 (ASQQEIIAGL…DVVAYIQKLE (79 aa)) is the Carrier domain. S41 is subject to O-(pantetheine 4'-phosphoryl)serine.

It belongs to the acyl carrier protein (ACP) family. Post-translationally, 4'-phosphopantetheine is transferred from CoA to a specific serine of apo-AcpM.

The protein resides in the cytoplasm. Acyl carrier protein involved in meromycolate extension. The protein is Meromycolate extension acyl carrier protein (acpM) of Mycolicibacterium aurum (Mycobacterium aurum).